An 872-amino-acid polypeptide reads, in one-letter code: Probably inactive leucine-rich repeat receptor-like protein kinase At5g06940 (872 aa).

Residues 1–26 (MATRFKHQFSISLALTFFFFFTKTFS) form the signal peptide. The Extracellular segment spans residues 27 to 540 (FTENEELGNL…RSNFHKKGGK (514 aa)). N-linked (GlcNAc...) asparagine glycosylation is found at N55, N63, and N86. LRR repeat units lie at residues 79–98 (SINLQSLNLSGEISDSICDL), 99–122 (PYLTHLDLSLNFFNQPIPLQLSRC), 123–146 (VTLETLNLSSNLIWGTIPDQISEF), 147–169 (SSLKVIDFSSNHVEGMIPEDLGL), 171–193 (FNLQVLNLGSNLLTGIVPPAIGK), 195–217 (SELVVLDLSENSYLVSEIPSFLG), 219–243 (LDKLEQLLLHRSGFHGEIPTSFVGL), 244–267 (TSLRTLDLSLNNLSGEIPRSLGPS), 269–292 (KNLVSLDVSQNKLSGSFPSGICSG), 294–316 (RLINLSLHSNFFEGSLPNSIGEC), 317–340 (LSLERLQVQNNGFSGEFPVVLWKL), 341–365 (PRIKIIRADNNRFTGQVPESVSLAS), 367–389 (LEQVEIVNNSFSGEIPHGLGLVK), 391–412 (LYKFSASQNRFSGELPPNFCDS), 413–435 (PVLSIVNISHNRLLGKIPELKNC), 436–459 (KKLVSLSLAGNAFTGEIPPSLADL), 460–482 (HVLTYLDLSDNSLTGLIPQGLQN), and 484–506 (KLALFNVSFNGLSGEVPHSLVSG). N-linked (GlcNAc...) asparagine glycosylation is present at N129. N255 carries an N-linked (GlcNAc...) asparagine glycan. A glycan (N-linked (GlcNAc...) asparagine) is linked at N297. N374 carries an N-linked (GlcNAc...) asparagine glycan. N-linked (GlcNAc...) asparagine glycosylation occurs at N419. N-linked (GlcNAc...) asparagine glycosylation is present at N489. Residues 541 to 561 (ALVLSLICLALAIATFLAVLY) form a helical membrane-spanning segment. Residues 562–872 (RYSRKKVQFK…ISSSVSPVSA (311 aa)) lie on the Cytoplasmic side of the membrane. T585 carries the phosphothreonine modification. The Protein kinase domain maps to 589-863 (LMKVVNESCP…VKVIKLLEGI (275 aa)). ATP is bound by residues 595-603 (ESCPSGSEV) and K617. A phosphotyrosine mark is found at Y662, Y699, Y754, and Y761.

This sequence belongs to the protein kinase superfamily. Ser/Thr protein kinase family.

The protein localises to the membrane. The polypeptide is Probably inactive leucine-rich repeat receptor-like protein kinase At5g06940 (Arabidopsis thaliana (Mouse-ear cress)).